A 158-amino-acid polypeptide reads, in one-letter code: Ribosomal RNA large subunit methyltransferase H (158 aa).

Residues Leu-72, Gly-103, and 122-127 (LGNLTL) contribute to the S-adenosyl-L-methionine site.

Belongs to the RNA methyltransferase RlmH family. As to quaternary structure, homodimer.

It localises to the cytoplasm. The catalysed reaction is pseudouridine(1915) in 23S rRNA + S-adenosyl-L-methionine = N(3)-methylpseudouridine(1915) in 23S rRNA + S-adenosyl-L-homocysteine + H(+). Specifically methylates the pseudouridine at position 1915 (m3Psi1915) in 23S rRNA. The polypeptide is Ribosomal RNA large subunit methyltransferase H (Acidiphilium cryptum (strain JF-5)).